The primary structure comprises 790 residues: LPS-assembly protein LptD (790 aa).

Residues 1–20 (MRMLRWLILSAFSVAGAVQA) form the signal peptide.

The protein belongs to the LptD family. In terms of assembly, component of the lipopolysaccharide transport and assembly complex. Interacts with LptE and LptA.

The protein localises to the cell outer membrane. In terms of biological role, together with LptE, is involved in the assembly of lipopolysaccharide (LPS) at the surface of the outer membrane. The sequence is that of LPS-assembly protein LptD from Bordetella parapertussis (strain 12822 / ATCC BAA-587 / NCTC 13253).